Consider the following 391-residue polypeptide: Winged helix repair factor 1 (391 aa).

Low complexity-rich tracts occupy residues M1–I24 and L49–N63. The tract at residues M1 to T95 is disordered. Residues G64–E74 are compositionally biased toward acidic residues. The segment covering N82–T95 has biased composition (low complexity).

Belongs to the STK19 family.

The protein localises to the nucleus. DNA-binding protein which is required for efficient transcription-coupled nucleotide excision repair. This is Winged helix repair factor 1 from Dictyostelium discoideum (Social amoeba).